A 214-amino-acid chain; its full sequence is A-type ATP synthase subunit D (214 aa).

This sequence belongs to the V-ATPase D subunit family. As to quaternary structure, has multiple subunits with at least A(3), B(3), C, D, E, F, H, I and proteolipid K(x).

The protein localises to the cell membrane. Component of the A-type ATP synthase that produces ATP from ADP in the presence of a proton gradient across the membrane. This chain is A-type ATP synthase subunit D, found in Pyrococcus furiosus (strain ATCC 43587 / DSM 3638 / JCM 8422 / Vc1).